Consider the following 70-residue polypeptide: Cold shock-like protein CspH (70 aa).

Positions 7–67 (GIVKTFDRKS…GLRGPTAANV (61 aa)) constitute a CSD domain.

It localises to the cytoplasm. The protein is Cold shock-like protein CspH (cspH) of Escherichia coli O6:H1 (strain CFT073 / ATCC 700928 / UPEC).